A 367-amino-acid polypeptide reads, in one-letter code: S-adenosylmethionine:tRNA ribosyltransferase-isomerase (367 aa).

This sequence belongs to the QueA family. In terms of assembly, monomer.

It is found in the cytoplasm. It catalyses the reaction 7-aminomethyl-7-carbaguanosine(34) in tRNA + S-adenosyl-L-methionine = epoxyqueuosine(34) in tRNA + adenine + L-methionine + 2 H(+). It participates in tRNA modification; tRNA-queuosine biosynthesis. Its function is as follows. Transfers and isomerizes the ribose moiety from AdoMet to the 7-aminomethyl group of 7-deazaguanine (preQ1-tRNA) to give epoxyqueuosine (oQ-tRNA). The sequence is that of S-adenosylmethionine:tRNA ribosyltransferase-isomerase from Beijerinckia indica subsp. indica (strain ATCC 9039 / DSM 1715 / NCIMB 8712).